The primary structure comprises 196 residues: Phosphoheptose isomerase (196 aa).

Positions 34-192 (MVQCLLGGNK…CEIIDTTLFP (159 aa)) constitute an SIS domain. Position 49–51 (49–51 (NGG)) interacts with substrate. Zn(2+) is bound by residues H58 and Q62. Residues Q62, 91–92 (ND), 117–119 (STS), S122, and Q172 each bind substrate. Zn(2+)-binding residues include Q172 and H180.

It belongs to the SIS family. GmhA subfamily. In terms of assembly, homotetramer. Zn(2+) is required as a cofactor.

The protein localises to the cytoplasm. It catalyses the reaction 2 D-sedoheptulose 7-phosphate = D-glycero-alpha-D-manno-heptose 7-phosphate + D-glycero-beta-D-manno-heptose 7-phosphate. It functions in the pathway carbohydrate biosynthesis; D-glycero-D-manno-heptose 7-phosphate biosynthesis; D-glycero-alpha-D-manno-heptose 7-phosphate and D-glycero-beta-D-manno-heptose 7-phosphate from sedoheptulose 7-phosphate: step 1/1. In terms of biological role, catalyzes the isomerization of sedoheptulose 7-phosphate in D-glycero-D-manno-heptose 7-phosphate. This Colwellia psychrerythraea (strain 34H / ATCC BAA-681) (Vibrio psychroerythus) protein is Phosphoheptose isomerase.